A 67-amino-acid chain; its full sequence is MEEWDVPQMKKEVESLKYQLAFKREMSSKTIPELLKWIEDGIPKDPFLNPDLMKNNPWVEKAKCTIL.

At Cys64 the chain carries Cysteine methyl ester. Cys64 carries the S-farnesyl cysteine lipid modification. A propeptide spans 65–67 (TIL) (removed in mature form).

It belongs to the G protein gamma family. As to quaternary structure, g proteins are composed of 3 units, alpha, beta and gamma.

It is found in the cell membrane. Functionally, guanine nucleotide-binding proteins (G proteins) are involved as a modulator or transducer in various transmembrane signaling systems. The beta and gamma chains are required for the GTPase activity, for replacement of GDP by GTP, and for G protein-effector interaction. In Mus musculus (Mouse), this protein is Guanine nucleotide-binding protein G(I)/G(S)/G(O) subunit gamma-13 (Gng13).